Consider the following 488-residue polypeptide: Facilitated trehalose transporter Tret1-2 homolog (488 aa).

Over 1 to 28 (MKILMRADTHVSYSVPAEGTKANFTFSQ) the chain is Cytoplasmic. The chain crosses the membrane as a helical span at residues 29 to 49 (VLAALSVSLCSLVVGFVSAYT). The Extracellular segment spans residues 50-72 (SPALVSMTDRTITSFEVTKDAGS). A helical membrane pass occupies residues 73–93 (WVGGIMPLAALAGGITGGPLI). Topologically, residues 94–105 (EYLGRRNTILAT) are cytoplasmic. A helical membrane pass occupies residues 106–126 (AVPFIVSSLLIACAVNVIMIL). At 127-129 (CGR) the chain is on the extracellular side. The helical transmembrane segment at 130–150 (FLTGFCVGIASLSLPVYLGET) threads the bilayer. Topologically, residues 151 to 160 (LQPEVRGTLG) are cytoplasmic. A helical membrane pass occupies residues 161-181 (LLPTALGNIGILVCYVAGSFM). A glycan (N-linked (GlcNAc...) asparagine) is linked at N182. Residues 182 to 184 (NWS) lie on the Extracellular side of the membrane. The helical transmembrane segment at 185 to 205 (ILAFLGAALPVPFLILMIIIP) threads the bilayer. At 206-268 (ETPRWFVNRG…ELFKRINLKP (63 aa)) the chain is on the cytoplasmic side. A helical transmembrane segment spans residues 269-289 (LSISLGLMFFQQFSGINAVIF). At 290–305 (YTVQIFKDAGSTIDSN) the chain is on the extracellular side. A helical transmembrane segment spans residues 306–326 (LCTIIVGIVNFFATFMGIILI). Residues 327 to 332 (DRLGRK) lie on the Cytoplasmic side of the membrane. The chain crosses the membrane as a helical span at residues 333–353 (ILLYVSDIAMILTLSILGGFF). The Extracellular portion of the chain corresponds to 354 to 372 (YCKAHGPDVSHLGWLPLSC). Residues 373-393 (FVIYILGFSLGFGPIPWLMMG) form a helical membrane-spanning segment. The Cytoplasmic segment spans residues 394–402 (EILPAKIRG). The chain crosses the membrane as a helical span at residues 403–423 (PAASVVTAFNWFCTFVVTKTF). Topologically, residues 424-433 (QDLTVAMGPH) are extracellular. A helical membrane pass occupies residues 434–454 (GAFWLFGVVCIVGLFFVIIYV). Residues 455-488 (PETRGKSLEEIERKMMGRVPISAVVNIKPFSFNM) are Cytoplasmic-facing.

The protein belongs to the major facilitator superfamily. Sugar transporter (TC 2.A.1.1) family. Trehalose transporter subfamily.

The protein localises to the cell membrane. In terms of biological role, fails to transport trehalose. This is Facilitated trehalose transporter Tret1-2 homolog from Drosophila sechellia (Fruit fly).